Here is a 387-residue protein sequence, read N- to C-terminus: DNA double-strand break repair protein Mre11 (387 aa).

4 residues coordinate Mn(2+): Asp-11, His-13, Asp-52, and Asp-87. The active-site Proton donor is the His-88. The Mn(2+) site is built by His-159, His-190, and His-192.

The protein belongs to the MRE11/RAD32 family. Homodimer. Forms a heterotetramer composed of two Mre11 subunits and two Rad50 subunits. Interacts with HerA. Requires Mn(2+) as cofactor.

Its activity is regulated as follows. Nuclease activity is regulated by Rad50. In terms of biological role, part of the Rad50/Mre11 complex, which is involved in the early steps of DNA double-strand break (DSB) repair. The complex may facilitate opening of the processed DNA ends to aid in the recruitment of HerA and NurA. Mre11 binds to DSB ends and has both double-stranded 3'-5' exonuclease activity and single-stranded endonuclease activity. In Sulfurisphaera tokodaii (strain DSM 16993 / JCM 10545 / NBRC 100140 / 7) (Sulfolobus tokodaii), this protein is DNA double-strand break repair protein Mre11.